A 210-amino-acid chain; its full sequence is Phosphoenolpyruvate guanylyltransferase (210 aa).

Thr-130, Gly-146, and Ser-149 together coordinate phosphoenolpyruvate.

Belongs to the CofC family.

It carries out the reaction phosphoenolpyruvate + GTP + H(+) = enolpyruvoyl-2-diphospho-5'-guanosine + diphosphate. Its pathway is cofactor biosynthesis; coenzyme F420 biosynthesis. Guanylyltransferase that catalyzes the activation of phosphoenolpyruvate (PEP) as enolpyruvoyl-2-diphospho-5'-guanosine, via the condensation of PEP with GTP. It is involved in the biosynthesis of coenzyme F420, a hydride carrier cofactor. The protein is Phosphoenolpyruvate guanylyltransferase of Roseiflexus castenholzii (strain DSM 13941 / HLO8).